The primary structure comprises 825 residues: Endochitinase A1 (825 aa).

The N-terminal stretch at 1 to 22 (MVSSKLSFVATAVAALAPLASA) is a signal peptide. Positions 29 to 338 (SNLAIYWGQG…DHMKDILLHC (310 aa)) constitute a GH18 domain. E174 serves as the catalytic Proton donor. Disordered stretches follow at residues 338–568 (CDPS…TTTA), 680–736 (PVTE…VSTS), and 750–792 (PLIL…YTQE). Residues 344–554 (VTSSSAVPSS…STDESSTTVG (211 aa)) are compositionally biased toward low complexity. N559 carries N-linked (GlcNAc...) asparagine glycosylation. The segment covering 701–712 (EGSNPTQPSGAS) has biased composition (polar residues). A glycan (N-linked (GlcNAc...) asparagine) is linked at N717. Residues 772 to 792 (PSGQNSGSSSHVPIPPSYTQE) show a composition bias toward polar residues. G800 is lipidated: GPI-anchor amidated glycine. The propeptide at 801-825 (AASRVTGLGHGLVLTVLTLSAFFVL) is removed in mature form.

Belongs to the glycosyl hydrolase 18 family. Chitinase class III subfamily. In terms of processing, O-mannosylated by pmt4.

It localises to the cell membrane. The protein localises to the secreted. Its subcellular location is the cell wall. The enzyme catalyses Random endo-hydrolysis of N-acetyl-beta-D-glucosaminide (1-&gt;4)-beta-linkages in chitin and chitodextrins.. The cyclic peptide natural product argifin acts as a specific inhibitor. Its function is as follows. GPI-anchored chitinase involved in the degradation of chitin, a component of the cell walls of fungi and exoskeletal elements of some animals (including worms and arthropods). Required to reshape the cell wall at the sites where cell wall remodeling and/or cell wall maturation actively take place such as sites of conidia formation. This chain is Endochitinase A1 (chiA1), found in Aspergillus fumigatus (Neosartorya fumigata).